We begin with the raw amino-acid sequence, 220 residues long: Charged multivesicular body protein 2a (220 aa).

Coiled coils occupy residues 12–53 (EEML…MAKQ) and 199–220 (PSAALADADADLEERLNNLRRD). The segment at 179-208 (LSNLPSTGGSLSVAGAKKGEPSAALADADA) is disordered. An MIT-interacting motif motif is present at residues 208–218 (ADLEERLNNLR).

It belongs to the SNF7 family. In terms of assembly, probable core component of the endosomal sorting required for transport complex III (ESCRT-III). ESCRT-III components are thought to multimerize to form a flat lattice on the perimeter membrane of the endosome.

Its subcellular location is the late endosome membrane. It localises to the cytoplasm. Probable core component of the endosomal sorting required for transport complex III (ESCRT-III) which is involved in multivesicular bodies (MVBs) formation and sorting of endosomal cargo proteins into MVBs. MVBs contain intraluminal vesicles (ILVs) that are generated by invagination and scission from the limiting membrane of the endosome and mostly are delivered to lysosomes enabling degradation of membrane proteins, such as stimulated growth factor receptors, lysosomal enzymes and lipids. The chain is Charged multivesicular body protein 2a (chmp2a) from Xenopus tropicalis (Western clawed frog).